We begin with the raw amino-acid sequence, 126 residues long: Large ribosomal subunit protein bL17 (126 aa).

The protein belongs to the bacterial ribosomal protein bL17 family. Part of the 50S ribosomal subunit. Contacts protein L32.

This chain is Large ribosomal subunit protein bL17, found in Coxiella burnetii (strain CbuG_Q212) (Coxiella burnetii (strain Q212)).